A 24-amino-acid chain; its full sequence is MRITVNVDGTSYTDEVEPRTLLVH.

Heterotrimer composed of an alpha, a beta and a gamma chain.

The chain is Formate ester dehydrogenase gamma chain from Amycolatopsis methanolica.